The following is a 489-amino-acid chain: Betaine aldehyde dehydrogenase (489 aa).

Residues threonine 26 and aspartate 93 each coordinate K(+). 150-152 (GAW) is a binding site for NAD(+). Residue lysine 162 is the Charge relay system of the active site. 176–179 (KPSE) is a binding site for NAD(+). Valine 180 contacts K(+). Position 229-232 (229-232 (GVET)) interacts with NAD(+). Leucine 245 provides a ligand contact to K(+). The Proton acceptor role is filled by glutamate 251. Residues glycine 253, cysteine 285, and glutamate 386 each coordinate NAD(+). Cysteine 285 (nucleophile) is an active-site residue. Cysteine 285 bears the Cysteine sulfenic acid (-SOH) mark. Residues lysine 456 and glycine 459 each contribute to the K(+) site. The active-site Charge relay system is glutamate 463.

This sequence belongs to the aldehyde dehydrogenase family. Dimer of dimers. It depends on K(+) as a cofactor.

It carries out the reaction betaine aldehyde + NAD(+) + H2O = glycine betaine + NADH + 2 H(+). It participates in amine and polyamine biosynthesis; betaine biosynthesis via choline pathway; betaine from betaine aldehyde: step 1/1. In terms of biological role, involved in the biosynthesis of the osmoprotectant glycine betaine. Catalyzes the irreversible oxidation of betaine aldehyde to the corresponding acid. The sequence is that of Betaine aldehyde dehydrogenase from Burkholderia ambifaria (strain ATCC BAA-244 / DSM 16087 / CCUG 44356 / LMG 19182 / AMMD) (Burkholderia cepacia (strain AMMD)).